Here is a 92-residue protein sequence, read N- to C-terminus: Small ribosomal subunit protein uS19 (92 aa).

Belongs to the universal ribosomal protein uS19 family.

Protein S19 forms a complex with S13 that binds strongly to the 16S ribosomal RNA. In Baumannia cicadellinicola subsp. Homalodisca coagulata, this protein is Small ribosomal subunit protein uS19.